A 662-amino-acid polypeptide reads, in one-letter code: Transcription activator of gluconeogenesis NECHADRAFT_59099 (662 aa).

Positions 1–61 (MPHEMEENGA…KDPLRPRRKK (61 aa)) are disordered. Composition is skewed to basic and acidic residues over residues 25–34 (TFLKDDEKMT) and 43–56 (TEVKKKYDPKDPLR). A DNA-binding region (zn(2)-C6 fungal-type) is located at residues 66-94 (CFACQRAHLTCGDERPCQRCIKRGLADAC). 3 disordered regions span residues 105-149 (LHDA…TGSN), 502-524 (YSGRSTNGTNTPDHNSQGEMTTP), and 580-606 (YRAPQDPDQKEPGSQKDAQPGILSSRV). Composition is skewed to polar residues over residues 121–130 (YNPTPTPSRT) and 137–149 (SSQSDNLSATGSN). Residues 448–519 (TLVEYDDFLQ…TNTPDHNSQG (72 aa)) form the PAS domain. The segment covering 582-593 (APQDPDQKEPGS) has biased composition (basic and acidic residues).

The protein belongs to the ERT1/acuK family.

The protein resides in the nucleus. Transcription factor which regulates nonfermentable carbon utilization. Activator of gluconeogenetic genes. This chain is Transcription activator of gluconeogenesis NECHADRAFT_59099, found in Fusarium vanettenii (strain ATCC MYA-4622 / CBS 123669 / FGSC 9596 / NRRL 45880 / 77-13-4) (Fusarium solani subsp. pisi).